A 285-amino-acid chain; its full sequence is Acetyl-coenzyme A carboxylase carboxyl transferase subunit beta (285 aa).

The region spanning 23-285 is the CoA carboxyltransferase N-terminal domain; the sequence is VFRRCDGCSH…HLTAGRRARR (263 aa). Positions 27, 30, 46, and 49 each coordinate Zn(2+). A C4-type zinc finger spans residues 27–49; that stretch reads CDGCSHTHDAAELARTFEVCSQC.

Belongs to the AccD/PCCB family. Acetyl-CoA carboxylase is a heterohexamer composed of biotin carboxyl carrier protein (AccB), biotin carboxylase (AccC) and two subunits each of ACCase subunit alpha (AccA) and ACCase subunit beta (AccD). Zn(2+) is required as a cofactor.

The protein resides in the cytoplasm. It carries out the reaction N(6)-carboxybiotinyl-L-lysyl-[protein] + acetyl-CoA = N(6)-biotinyl-L-lysyl-[protein] + malonyl-CoA. It participates in lipid metabolism; malonyl-CoA biosynthesis; malonyl-CoA from acetyl-CoA: step 1/1. Component of the acetyl coenzyme A carboxylase (ACC) complex. Biotin carboxylase (BC) catalyzes the carboxylation of biotin on its carrier protein (BCCP) and then the CO(2) group is transferred by the transcarboxylase to acetyl-CoA to form malonyl-CoA. This chain is Acetyl-coenzyme A carboxylase carboxyl transferase subunit beta, found in Sorangium cellulosum (strain So ce56) (Polyangium cellulosum (strain So ce56)).